A 602-amino-acid chain; its full sequence is Sodium- and chloride-dependent GABA transporter 2 (602 aa).

Over 1-40 (MENRASGTTSNGETKPVCPAMEKVEEDGTLEREHWNNKME) the chain is Cytoplasmic. 3 helical membrane-spanning segments follow: residues 41-61 (FVLS…FPYL), 68-88 (GAFF…VFFL), and 121-141 (IVSL…FYLF). Residues 142–206 (SSFTTDLPWG…GIQHLGSLRW (65 aa)) lie on the Extracellular side of the membrane. C153 and C162 are disulfide-bonded. N169, N173, and N178 each carry an N-linked (GlcNAc...) asparagine glycan. Transmembrane regions (helical) follow at residues 207–227 (ELVL…WKGV) and 233–253 (VVYF…IRGV). The N-linked (GlcNAc...) asparagine glycan is linked to N269. 7 helical membrane-spanning segments follow: residues 282-302 (AGTQ…ALGS), 319-339 (ILNS…LGFM), 366-386 (VVML…VVLL), 418-438 (VLIL…LTEG), 453-473 (GMCL…VYGA), 490-510 (PLIK…TFLF), and 528-548 (WWGD…IPAW). At 549-602 (SIYKLRTLKGPLRERLRQLVCPAEDLPQKNQPEPTAPATPMTSLLRLTELESNC) the chain is on the cytoplasmic side. T587 is modified (phosphothreonine). S591 carries the phosphoserine modification.

It belongs to the sodium:neurotransmitter symporter (SNF) (TC 2.A.22) family. SLC6A13 subfamily. Expressed at high levels in liver, followed by kidney and leptomeninges, and very low levels in the cerebellum (at protein level). In the brain, detected in some blood vessels (at protein level). In the kidney, expressed in the cortex, including parts of the proximal tubules, but not in the medulla (at protein level). In the liver, highest expression in periportal hepatocytes, with highest density at the vascular side (at protein level). Also detected at low levels in other organs, including skeletal muscle.

It localises to the cell membrane. The protein localises to the basolateral cell membrane. The catalysed reaction is 4-aminobutanoate(out) + chloride(out) + 2 Na(+)(out) = 4-aminobutanoate(in) + chloride(in) + 2 Na(+)(in). It carries out the reaction taurine(out) + chloride(out) + 2 Na(+)(out) = taurine(in) + chloride(in) + 2 Na(+)(in). The enzyme catalyses beta-alanine(out) + chloride(out) + 2 Na(+)(out) = beta-alanine(in) + chloride(in) + 2 Na(+)(in). It catalyses the reaction hypotaurine(out) + chloride(out) + 2 Na(+)(out) = hypotaurine(in) + chloride(in) + 2 Na(+)(in). Gamma-aminobutyric acid (GABA) transport is inhibited by beta-alanine, taurine, hypotaurine, beta-guanidinopropionic acid, 2,3-diaminopropionic acid, guvacine and nipecotic acid. Beta-alanine transport is inhibited by GABA. Taurine transport is inhibited by GABA, beta-alanine, SNAP-5114, nigericin, nipecotic acid and ouabain. Its function is as follows. Mediates sodium- and chloride-dependent transport of gamma-aminobutyric acid (GABA). Can also mediate transport of beta-alanine, taurine and hypotaurine and is the major taurine transporter in hepatocytes. The sequence is that of Sodium- and chloride-dependent GABA transporter 2 (Slc6a13) from Mus musculus (Mouse).